Here is a 288-residue protein sequence, read N- to C-terminus: Prohibitin-1, mitochondrial (288 aa).

The Mitochondrial matrix segment spans residues 1 to 10 (MNNVKVPKIP). A helical; Signal-anchor for type II membrane protein transmembrane segment spans residues 11–30 (GGGAISTLLKVGIIGGLGLY). The Mitochondrial intermembrane segment spans residues 31 to 288 (GATHSLYNVE…GMNLDVDAKN (258 aa)). Positions 186 to 219 (KEFTAAIEAKQVAAQEAERAKFIVEKAEQDKRSA) form a coiled coil.

The protein belongs to the prohibitin family. In terms of assembly, component of a prohibitin multimeric complex in mitochondrial membranes. In terms of tissue distribution, mostly expressed in proliferative tissues, including vasculature, shoot and root apical tissues.

It is found in the mitochondrion inner membrane. In terms of biological role, prohibitin probably acts as a holdase/unfoldase for the stabilization of newly synthesized mitochondrial proteins. The protein is Prohibitin-1, mitochondrial (PHB1) of Arabidopsis thaliana (Mouse-ear cress).